Here is a 166-residue protein sequence, read N- to C-terminus: Photosystem I assembly protein Ycf3 (166 aa).

3 TPR repeats span residues 31–64 (AFKYYRSGMAAQVDGNYAKALGNYTEALALEEDP), 68–101 (SYILYNMGLIFANNGDHEKALDYYHQSLELNPNL), and 116–149 (GEQAEEAAELDEAERFFDLAADFWKRAIKIAPNN).

Belongs to the Ycf3 family.

It localises to the cellular thylakoid membrane. Essential for the assembly of the photosystem I (PSI) complex. May act as a chaperone-like factor to guide the assembly of the PSI subunits. In Acaryochloris marina (strain MBIC 11017), this protein is Photosystem I assembly protein Ycf3.